Here is an 886-residue protein sequence, read N- to C-terminus: Pyruvate dehydrogenase E1 component (886 aa).

As to quaternary structure, homodimer. Part of the PDH complex, consisting of multiple copies of pyruvate dehydrogenase (E1), dihydrolipoamide acetyltransferase (E2) and lipoamide dehydrogenase (E3). The cofactor is thiamine diphosphate.

It carries out the reaction N(6)-[(R)-lipoyl]-L-lysyl-[protein] + pyruvate + H(+) = N(6)-[(R)-S(8)-acetyldihydrolipoyl]-L-lysyl-[protein] + CO2. Functionally, component of the pyruvate dehydrogenase (PDH) complex, that catalyzes the overall conversion of pyruvate to acetyl-CoA and CO(2). This is Pyruvate dehydrogenase E1 component (aceE) from Haemophilus influenzae (strain ATCC 51907 / DSM 11121 / KW20 / Rd).